We begin with the raw amino-acid sequence, 343 residues long: Mitochondrial amidoxime-reducing component 1 (343 aa).

Topologically, residues 1–25 are mitochondrial matrix; the sequence is MSNTVFSGAVGPLRAAALSISRHRL. A helical; Signal-anchor for type II membrane protein membrane pass occupies residues 26-44; the sequence is PLLCAAGLGLTAVASWMWW. At 45–343 the chain is on the cytoplasmic side; it reads RKRQGEAEDL…DPVYRVTRKG (299 aa). Mo-molybdopterin contacts are provided by K69, S70, and R94. Residues 95 to 186 form an MOSC N-terminal region region; sequence HWLVVTEEGN…SSQPYRLVHF (92 aa). The region spanning 181–339 is the MOSC domain; it reads YRLVHFEADV…IRVGDPVYRV (159 aa). Mo-molybdopterin-binding residues include S215, R242, R276, C277, and Y321.

The cofactor is Mo-molybdopterin.

It is found in the mitochondrion outer membrane. Its subcellular location is the membrane. The enzyme catalyses N(omega)-hydroxy-L-arginine + 2 Fe(II)-[cytochrome b5] + 2 H(+) = L-arginine + 2 Fe(III)-[cytochrome b5] + H2O. Catalyzes the reduction of N-oxygenated molecules, acting as a counterpart of cytochrome P450 and flavin-containing monooxygenases in metabolic cycles. As a component of prodrug-converting system, reduces a multitude of N-hydroxylated prodrugs particularly amidoximes, leading to increased drug bioavailability. May be involved in mitochondrial N(omega)-hydroxy-L-arginine (NOHA) reduction, regulating endogenous nitric oxide levels and biosynthesis. Postulated to cleave the N-OH bond of N-hydroxylated substrates in concert with electron transfer from NADH to cytochrome b5 reductase then to cytochrome b5, the ultimate electron donor that primes the active site for substrate reduction. In Xenopus laevis (African clawed frog), this protein is Mitochondrial amidoxime-reducing component 1 (mtarc1).